We begin with the raw amino-acid sequence, 236 residues long: MRLAVNVDHIATLRNARNASLPDPVTAAVIAELNGASGIVCHLREDRRHIKDRDLERLREAVTTRLDLEMAMTTEMQHIAIRTKPELITLVPEKREELTTEGGFDIIRHYDTLCRYIKPVQDAGIEVSIFIEPEEEAIERAASAGAEIVELHTGPYSLKKTPAELETELMRIRKAATFARSRGLRVVAGHGLDYFNIVPFRTIEEIEEVSIGHALIARAALVGMETAVRDMLRIIN.

Residue N6 coordinates 3-amino-2-oxopropyl phosphate. Residue 8-9 (DH) coordinates 1-deoxy-D-xylulose 5-phosphate. R17 is a binding site for 3-amino-2-oxopropyl phosphate. H42 (proton acceptor) is an active-site residue. 2 residues coordinate 1-deoxy-D-xylulose 5-phosphate: R44 and H49. The Proton acceptor role is filled by E69. T99 is a binding site for 1-deoxy-D-xylulose 5-phosphate. Catalysis depends on H190, which acts as the Proton donor. 3-amino-2-oxopropyl phosphate-binding positions include G191 and 212–213 (GH).

It belongs to the PNP synthase family. As to quaternary structure, homooctamer; tetramer of dimers.

The protein resides in the cytoplasm. The enzyme catalyses 3-amino-2-oxopropyl phosphate + 1-deoxy-D-xylulose 5-phosphate = pyridoxine 5'-phosphate + phosphate + 2 H2O + H(+). It functions in the pathway cofactor biosynthesis; pyridoxine 5'-phosphate biosynthesis; pyridoxine 5'-phosphate from D-erythrose 4-phosphate: step 5/5. Functionally, catalyzes the complicated ring closure reaction between the two acyclic compounds 1-deoxy-D-xylulose-5-phosphate (DXP) and 3-amino-2-oxopropyl phosphate (1-amino-acetone-3-phosphate or AAP) to form pyridoxine 5'-phosphate (PNP) and inorganic phosphate. This Prosthecochloris aestuarii (strain DSM 271 / SK 413) protein is Pyridoxine 5'-phosphate synthase.